The following is a 717-amino-acid chain: Probable inactive histone-lysine N-methyltransferase SUVR2 (717 aa).

The span at 61–73 shows a compositional bias: basic and acidic residues; it reads QAIQESEEKKADE. A disordered region spans residues 61–136; sequence QAIQESEEKK…LGSPTLEGPS (76 aa). A compositionally biased stretch (low complexity) spans 120-130; the sequence is SALASPSLGSP. Zn(2+)-binding residues include Cys-445, Cys-446, Cys-449, Cys-453, Cys-462, Cys-529, Cys-533, Cys-535, and Cys-539. The Pre-SET domain maps to 458-547; sequence MACRCATAFN…NCGNRVVQQG (90 aa). One can recognise an SET domain in the interval 550 to 679; it reads NKLQVFFTPN…AMEELTWDYG (130 aa). S-adenosyl-L-methionine-binding positions include 561–563 and 635–636; these read RGW and NH. Residue Cys-638 participates in Zn(2+) binding. Tyr-678 serves as a coordination point for S-adenosyl-L-methionine. The Post-SET domain occupies 690–706; the sequence is SPFHCQCGSDFCRVRKQ. Residues Cys-694, Cys-696, and Cys-701 each coordinate Zn(2+).

The protein belongs to the class V-like SAM-binding methyltransferase superfamily. Histone-lysine methyltransferase family. In terms of assembly, interacts with SUVR1, CHR19, CHR28 and itself. Interacts with CHR27.

Its subcellular location is the nucleus. The protein resides in the chromosome. Probable inactive histone-lysine methyltransferase that acts as regulator of transctiptional gene silencing independently of histone H3K9 methylation. Contributes to transcriptional gene silencing at RNA-directed DNA methylation (RdDM) target loci but also at RdDM-independent target loci. Forms a complex with SUVR1 and associates with the SNF2-related chromatin-remodeling proteins CHR19, CHR27, and CHR28, thereby mediating nucleosome positioning and transcriptional silencing. Does not possess histone-lysine methyltransferase activity in vitro, and the conserved catalytic sites of SUVR2 are dispensable for its function in transcriptional gene silencing. In Arabidopsis thaliana (Mouse-ear cress), this protein is Probable inactive histone-lysine N-methyltransferase SUVR2 (SUVR2).